The primary structure comprises 866 residues: Translation initiation factor IF-2 (866 aa).

Disordered stretches follow at residues 1–63 (MTND…AAVQ) and 92–257 (VVRA…RGRS). The span at 26 to 36 (ETGQVRQSFSH) shows a compositional bias: polar residues. Positions 92–135 (VVRAAEEAERKRLEEIERRRREEEEARLKVEEEARRKAEEEAAR) are enriched in basic and acidic residues. Low complexity-rich tracts occupy residues 152–164 (VAPA…AAPQ) and 179–197 (PDAS…TEAP). Positions 365 to 533 (SRPPVVTVMG…AILLQSEILD (169 aa)) constitute a tr-type G domain. Residues 374-381 (GHVDHGKT) are G1. 374–381 (GHVDHGKT) is a binding site for GTP. The segment at 399-403 (GITQH) is G2. A G3 region spans residues 421-424 (DTPG). GTP contacts are provided by residues 421–425 (DTPGH) and 475–478 (NKMD). A G4 region spans residues 475–478 (NKMD). Residues 511 to 513 (SAK) are G5.

It belongs to the TRAFAC class translation factor GTPase superfamily. Classic translation factor GTPase family. IF-2 subfamily.

Its subcellular location is the cytoplasm. In terms of biological role, one of the essential components for the initiation of protein synthesis. Protects formylmethionyl-tRNA from spontaneous hydrolysis and promotes its binding to the 30S ribosomal subunits. Also involved in the hydrolysis of GTP during the formation of the 70S ribosomal complex. The protein is Translation initiation factor IF-2 of Rhodospirillum rubrum (strain ATCC 11170 / ATH 1.1.1 / DSM 467 / LMG 4362 / NCIMB 8255 / S1).